Reading from the N-terminus, the 188-residue chain is dCTP deaminase (188 aa).

DCTP is bound by residues 111-116 (KSTYAR), 135-137 (TLE), Gln156, Tyr170, and Gln180. The Proton donor/acceptor role is filled by Glu137.

Belongs to the dCTP deaminase family. As to quaternary structure, homotrimer.

It carries out the reaction dCTP + H2O + H(+) = dUTP + NH4(+). It participates in pyrimidine metabolism; dUMP biosynthesis; dUMP from dCTP (dUTP route): step 1/2. Its function is as follows. Catalyzes the deamination of dCTP to dUTP. In Pseudomonas savastanoi pv. phaseolicola (strain 1448A / Race 6) (Pseudomonas syringae pv. phaseolicola (strain 1448A / Race 6)), this protein is dCTP deaminase.